The primary structure comprises 356 residues: tRNA-specific 2-thiouridylase MnmA (356 aa).

ATP contacts are provided by residues 6-13 (AMSGGVDS) and Leu32. Cys101 serves as the catalytic Nucleophile. Cys101 and Cys193 are oxidised to a cystine. Residue Gly125 coordinates ATP. The segment at 143–145 (KDQ) is interaction with tRNA. Cys193 (cysteine persulfide intermediate) is an active-site residue.

This sequence belongs to the MnmA/TRMU family.

The protein resides in the cytoplasm. The enzyme catalyses S-sulfanyl-L-cysteinyl-[protein] + uridine(34) in tRNA + AH2 + ATP = 2-thiouridine(34) in tRNA + L-cysteinyl-[protein] + A + AMP + diphosphate + H(+). Catalyzes the 2-thiolation of uridine at the wobble position (U34) of tRNA, leading to the formation of s(2)U34. The polypeptide is tRNA-specific 2-thiouridylase MnmA (Mycobacteroides abscessus (strain ATCC 19977 / DSM 44196 / CCUG 20993 / CIP 104536 / JCM 13569 / NCTC 13031 / TMC 1543 / L948) (Mycobacterium abscessus)).